A 382-amino-acid chain; its full sequence is tRNA (guanine(26)-N(2))-dimethyltransferase (382 aa).

A Trm1 methyltransferase domain is found at 4–373 (VEIIEGKARI…KNLDEIKECI (370 aa)). Residues R44, R69, and D87 each coordinate S-adenosyl-L-methionine. C246, C249, C263, and C266 together coordinate Zn(2+).

This sequence belongs to the class I-like SAM-binding methyltransferase superfamily. Trm1 family.

It carries out the reaction guanosine(26) in tRNA + 2 S-adenosyl-L-methionine = N(2)-dimethylguanosine(26) in tRNA + 2 S-adenosyl-L-homocysteine + 2 H(+). Its function is as follows. Dimethylates a single guanine residue at position 26 of a number of tRNAs using S-adenosyl-L-methionine as donor of the methyl groups. This chain is tRNA (guanine(26)-N(2))-dimethyltransferase, found in Sulfolobus acidocaldarius (strain ATCC 33909 / DSM 639 / JCM 8929 / NBRC 15157 / NCIMB 11770).